A 214-amino-acid polypeptide reads, in one-letter code: Large ribosomal subunit protein uL3 (214 aa).

The segment at threonine 134 to lysine 161 is disordered. Glutamine 151 is modified (N5-methylglutamine).

Belongs to the universal ribosomal protein uL3 family. Part of the 50S ribosomal subunit. Forms a cluster with proteins L14 and L19. Methylated by PrmB.

Functionally, one of the primary rRNA binding proteins, it binds directly near the 3'-end of the 23S rRNA, where it nucleates assembly of the 50S subunit. The chain is Large ribosomal subunit protein uL3 from Teredinibacter turnerae (strain ATCC 39867 / T7901).